The primary structure comprises 554 residues: Undecaprenyl phosphate-alpha-4-amino-4-deoxy-L-arabinose arabinosyl transferase (554 aa).

The next 11 helical transmembrane spans lie at Leu4–Val24, Phe87–Leu107, Val115–Val135, Phe178–Ile198, Leu206–Leu226, Tyr262–Phe282, Glu293–Gly313, Leu315–Thr335, Val351–Leu371, Gln384–Leu404, and Ala414–Val434.

This sequence belongs to the glycosyltransferase 83 family.

The protein localises to the cell inner membrane. The catalysed reaction is 4-amino-4-deoxy-alpha-L-arabinopyranosyl di-trans,octa-cis-undecaprenyl phosphate + lipid IVA = lipid IIA + di-trans,octa-cis-undecaprenyl phosphate.. Its pathway is lipopolysaccharide metabolism; 4-amino-4-deoxy-beta-L-arabinose-lipid A biosynthesis. Functionally, catalyzes the transfer of the L-Ara4N moiety of the glycolipid undecaprenyl phosphate-alpha-L-Ara4N to lipid A. The modified arabinose is attached to lipid A and is required for resistance to polymyxin and cationic antimicrobial peptides. In Yersinia pseudotuberculosis serotype O:3 (strain YPIII), this protein is Undecaprenyl phosphate-alpha-4-amino-4-deoxy-L-arabinose arabinosyl transferase.